Here is a 460-residue protein sequence, read N- to C-terminus: Ammonium transporter 1 member 3 (460 aa).

The next 10 membrane-spanning stretches (helical) occupy residues 15–37, 50–72, 98–117, 124–146, 166–188, 209–227, 255–277, 305–327, 337–356, and 377–399; these read AIYL…MLCA, LTNV…AFAF, FFLY…SGSI, TAYL…HWLW, IDFA…GSIV, NATL…WFGF, AVTT…RLLV, PWAA…ILAL, AAQL…GLFA, and GLIL…SIVV.

This sequence belongs to the ammonia transporter channel (TC 1.A.11.2) family. Leaves.

Its subcellular location is the membrane. Ammonium transporter that may be involved in ammonium transport throughout the plant. This is Ammonium transporter 1 member 3 (AMT1-3) from Solanum lycopersicum (Tomato).